The sequence spans 336 residues: 4-hydroxy-3-methylbut-2-enyl diphosphate reductase (336 aa).

The interval 1–23 is disordered; it reads MFGQRLDTLGAMSSSVSSPSPET. A [4Fe-4S] cluster-binding site is contributed by C36. Positions 65 and 98 each coordinate (2E)-4-hydroxy-3-methylbut-2-enyl diphosphate. Residues H65 and H98 each coordinate dimethylallyl diphosphate. 2 residues coordinate isopentenyl diphosphate: H65 and H98. Residue C120 coordinates [4Fe-4S] cluster. H148 lines the (2E)-4-hydroxy-3-methylbut-2-enyl diphosphate pocket. A dimethylallyl diphosphate-binding site is contributed by H148. H148 is an isopentenyl diphosphate binding site. E150 (proton donor) is an active-site residue. T190 lines the (2E)-4-hydroxy-3-methylbut-2-enyl diphosphate pocket. C220 contacts [4Fe-4S] cluster. (2E)-4-hydroxy-3-methylbut-2-enyl diphosphate is bound by residues S248, S249, N250, and S293. 4 residues coordinate dimethylallyl diphosphate: S248, S249, N250, and S293. The isopentenyl diphosphate site is built by S248, S249, N250, and S293.

Belongs to the IspH family. [4Fe-4S] cluster is required as a cofactor.

It catalyses the reaction isopentenyl diphosphate + 2 oxidized [2Fe-2S]-[ferredoxin] + H2O = (2E)-4-hydroxy-3-methylbut-2-enyl diphosphate + 2 reduced [2Fe-2S]-[ferredoxin] + 2 H(+). It carries out the reaction dimethylallyl diphosphate + 2 oxidized [2Fe-2S]-[ferredoxin] + H2O = (2E)-4-hydroxy-3-methylbut-2-enyl diphosphate + 2 reduced [2Fe-2S]-[ferredoxin] + 2 H(+). It functions in the pathway isoprenoid biosynthesis; dimethylallyl diphosphate biosynthesis; dimethylallyl diphosphate from (2E)-4-hydroxy-3-methylbutenyl diphosphate: step 1/1. The protein operates within isoprenoid biosynthesis; isopentenyl diphosphate biosynthesis via DXP pathway; isopentenyl diphosphate from 1-deoxy-D-xylulose 5-phosphate: step 6/6. Functionally, catalyzes the conversion of 1-hydroxy-2-methyl-2-(E)-butenyl 4-diphosphate (HMBPP) into a mixture of isopentenyl diphosphate (IPP) and dimethylallyl diphosphate (DMAPP). Acts in the terminal step of the DOXP/MEP pathway for isoprenoid precursor biosynthesis. This chain is 4-hydroxy-3-methylbut-2-enyl diphosphate reductase, found in Corynebacterium efficiens (strain DSM 44549 / YS-314 / AJ 12310 / JCM 11189 / NBRC 100395).